Consider the following 206-residue polypeptide: Protease (206 aa).

Catalysis depends on residues histidine 54, aspartate 71, and cysteine 122.

It belongs to the peptidase C5 family. Interacts with protease cofactor pVI-C; this interaction is necessary for protease activation.

It localises to the virion. Its subcellular location is the host nucleus. The catalysed reaction is Cleaves proteins of the adenovirus and its host cell at two consensus sites: -Yaa-Xaa-Gly-Gly-|-Xaa- and -Yaa-Xaa-Gly-Xaa-|-Gly- (in which Yaa is Met, Ile or Leu, and Xaa is any amino acid).. With respect to regulation, requires DNA and protease cofactor for maximal activation. Inside nascent virions, becomes partially activated by binding to the viral DNA, allowing it to cleave the cofactor that binds to the protease and fully activates it. Actin, like the viral protease cofactor, seems to act as a cofactor in the cleavage of cytokeratin 18 and of actin itself. Cleaves viral precursor proteins (pTP, pIIIa, pVI, pVII, pVIII, and pX) inside newly assembled particles giving rise to mature virions. Protease complexed to its cofactor slides along the viral DNA to specifically locate and cleave the viral precursors. Mature virions have a weakened organization compared to the unmature virions, thereby facilitating subsequent uncoating. Without maturation, the particle lacks infectivity and is unable to uncoat. Late in adenovirus infection, in the cytoplasm, may participate in the cytoskeleton destruction. Cleaves host cell cytoskeletal keratins K7 and K18. The polypeptide is Protease (Homo sapiens (Human)).